Reading from the N-terminus, the 281-residue chain is Bifunctional protein FolD (281 aa).

163–165 (GRS) contributes to the NADP(+) binding site.

It belongs to the tetrahydrofolate dehydrogenase/cyclohydrolase family. In terms of assembly, homodimer.

The enzyme catalyses (6R)-5,10-methylene-5,6,7,8-tetrahydrofolate + NADP(+) = (6R)-5,10-methenyltetrahydrofolate + NADPH. It carries out the reaction (6R)-5,10-methenyltetrahydrofolate + H2O = (6R)-10-formyltetrahydrofolate + H(+). The protein operates within one-carbon metabolism; tetrahydrofolate interconversion. In terms of biological role, catalyzes the oxidation of 5,10-methylenetetrahydrofolate to 5,10-methenyltetrahydrofolate and then the hydrolysis of 5,10-methenyltetrahydrofolate to 10-formyltetrahydrofolate. The sequence is that of Bifunctional protein FolD from Leuconostoc mesenteroides subsp. mesenteroides (strain ATCC 8293 / DSM 20343 / BCRC 11652 / CCM 1803 / JCM 6124 / NCDO 523 / NBRC 100496 / NCIMB 8023 / NCTC 12954 / NRRL B-1118 / 37Y).